The chain runs to 143 residues: Large ribosomal subunit protein uL15 (143 aa).

Positions 1 to 57 (MQLNNLKPAAGSKHAKRRVGRGIGSGLGKTAGRGHKGQKSRSGGFHKVGFEGGQMPL) are disordered. Gly residues predominate over residues 21-31 (RGIGSGLGKTA).

It belongs to the universal ribosomal protein uL15 family. Part of the 50S ribosomal subunit.

Functionally, binds to the 23S rRNA. The chain is Large ribosomal subunit protein uL15 from Ralstonia nicotianae (strain ATCC BAA-1114 / GMI1000) (Ralstonia solanacearum).